The following is a 225-amino-acid chain: MAQSDFLYPENPKRREEVNRLHQQLLDCLSDSFDVTNKLTEVLNMHLGCRLASIEMKRDGTIKENCDLIIQAIMKIQKELQKVDEALKDKLEPTLYRKLQDIKEKETDKIAIVQKVISVILGEATSAASAVAVKLVGSNVTTGIINKLVTVLAQIGASLLGSIGVAVLGLGIDMIVRAILGAVEKTQLQAAIKSYEKHLVEFKSASEKYNHAITEVINTVKHQMK.

Residues 62 to 92 (IKENCDLIIQAIMKIQKELQKVDEALKDKLE) adopt a coiled-coil conformation. Residues 155–175 (IGASLLGSIGVAVLGLGIDMI) traverse the membrane as a helical segment. The stretch at 183-207 (VEKTQLQAAIKSYEKHLVEFKSASE) forms a coiled coil.

Its subcellular location is the membrane. In Homo sapiens (Human), this protein is Single-pass membrane and coiled-coil domain-containing protein 3 (SMCO3).